The following is a 314-amino-acid chain: NAC domain-containing protein 10 (314 aa).

The segment covering 18 to 39 has biased composition (polar residues); that stretch reads VSNTDHPSVQLKDQSQSCVTSR. 2 disordered regions span residues 18–48 and 150–182; these read VSNTDHPSVQLKDQSQSCVTSRPDSKISAET and YTTGTRKRRKVSTDEEGHETRWHKTGKTRPVLS. One can recognise an NAC domain in the interval 77-236; the sequence is LPAGVKFDPS…EPVLSKVFYQ (160 aa). A compositionally biased stretch (basic and acidic residues) spans 160–171; it reads VSTDEEGHETRW. A DNA-binding region spans residues 187-242; that stretch reads TGFKKILVLYTNYGRQKKPEKTNWVMHQYHLGSSEDEKDGEPVLSKVFYQTQPRQC.

As to expression, expressed in protoxylem and elongating interfascicular fiber cells of elongating internodes, developing metaxylem cells and interfascicular fibers of non-elongating internodes and developing secondary xylem of roots.

The protein resides in the nucleus. Transcriptional activator that plays a regulatory role in the development of secondary cell wall fibers. Is a direct target of SND1. This Arabidopsis thaliana (Mouse-ear cress) protein is NAC domain-containing protein 10.